Here is a 229-residue protein sequence, read N- to C-terminus: 7-cyano-7-deazaguanine synthase (229 aa).

8–18 (FSGGQDSTTCL) provides a ligand contact to ATP. C186, C195, C198, and C201 together coordinate Zn(2+).

This sequence belongs to the QueC family. The cofactor is Zn(2+).

The catalysed reaction is 7-carboxy-7-deazaguanine + NH4(+) + ATP = 7-cyano-7-deazaguanine + ADP + phosphate + H2O + H(+). The protein operates within purine metabolism; 7-cyano-7-deazaguanine biosynthesis. Functionally, catalyzes the ATP-dependent conversion of 7-carboxy-7-deazaguanine (CDG) to 7-cyano-7-deazaguanine (preQ(0)). The polypeptide is 7-cyano-7-deazaguanine synthase (Edwardsiella ictaluri (strain 93-146)).